A 383-amino-acid chain; its full sequence is Mannan endo-1,4-beta-mannosidase (383 aa).

The signal sequence occupies residues 1 to 35 (MRNARSTLITTAGMAFAVLGLLFALAGPSAGRAEA). Residues 339-377 (GGSTGGTAPNGYPYCVNGGASDPDGDGWGWENSRSCVVR) form the CBM10 domain.

It belongs to the glycosyl hydrolase 5 (cellulase A) family. Monomer.

It catalyses the reaction Random hydrolysis of (1-&gt;4)-beta-D-mannosidic linkages in mannans, galactomannans and glucomannans.. In Streptomyces lividans, this protein is Mannan endo-1,4-beta-mannosidase (manA).